A 336-amino-acid chain; its full sequence is Corrinoid adenosyltransferase PduO (336 aa).

The interval 1–185 is pduON; sequence MAIYTRTGDA…IIREVSKRYL (185 aa). The pduOC stretch occupies residues 194-336; the sequence is KETTPVALSF…IAAINVGTHQ (143 aa). Heme is bound at residue His-207. The Mg(2+) site is built by Glu-215 and Gln-218.

Belongs to the Cob(I)alamin adenosyltransferase family. PduO subfamily. As to quaternary structure, the C-terminal domain (PduOC) forms stable octamers and also crystallizes as an octamer. Forms a complex with PduS. Heme b serves as cofactor. Mg(2+) is required as a cofactor.

It localises to the bacterial microcompartment. The enzyme catalyses cob(I)alamin-[corrinoid adenosyltransferase] + ATP = apo-[corrinoid adenosyltransferase] + adenosylcob(III)alamin + triphosphate. Its pathway is polyol metabolism; 1,2-propanediol degradation. It participates in cofactor biosynthesis; adenosylcobalamin biosynthesis. Its activity is regulated as follows. Inhibited by ADP but not significantly by other nucleotides, inhibited by diphosphate and less well by triphosphate. Functionally, converts cob(I)alamin to adenosylcobalamin (adenosylcob(III)alamin), the cofactor for propanediol dehydratase. Found in the bacterial microcompartment (BMC) dedicated to 1,2-propanediol (1,2-PD) degradation. For adenosylcobalamin synthesis dATP can replace ATP, but no other nucleotides will substitute. PduS and PduO allow regeneration of the adenosylcobalamin cofactor within the BMC. In terms of biological role, the 1,2-PD-specific bacterial microcompartment (BMC) concentrates low levels of 1,2-PD catabolic enzymes, concentrates volatile reaction intermediates thus enhancing pathway flux and keeps the level of toxic, mutagenic propionaldehyde low. This chain is Corrinoid adenosyltransferase PduO, found in Salmonella typhimurium (strain LT2 / SGSC1412 / ATCC 700720).